The primary structure comprises 337 residues: 5-formaminoimidazole-4-carboxamide-1-(beta)-D-ribofuranosyl 5'-monophosphate synthetase (337 aa).

2 residues coordinate 5-amino-1-(5-phospho-beta-D-ribosyl)imidazole-4-carboxamide: His-23 and Ser-87. Residues 121–328 (MRLLEYAGIP…IAHEIVNAVK (208 aa)) form the ATP-grasp domain. Residues 144 to 191 (PVIV…VPAY) and Glu-213 each bind ATP. A 5-amino-1-(5-phospho-beta-D-ribosyl)imidazole-4-carboxamide-binding site is contributed by Asn-233. Mg(2+)-binding residues include Glu-272 and Glu-285.

It belongs to the phosphohexose mutase family. Requires Mg(2+) as cofactor. Mn(2+) serves as cofactor.

The enzyme catalyses 5-amino-1-(5-phospho-beta-D-ribosyl)imidazole-4-carboxamide + formate + ATP = 5-formamido-1-(5-phospho-D-ribosyl)imidazole-4-carboxamide + ADP + phosphate. It functions in the pathway purine metabolism; IMP biosynthesis via de novo pathway; 5-formamido-1-(5-phospho-D-ribosyl)imidazole-4-carboxamide from 5-amino-1-(5-phospho-D-ribosyl)imidazole-4-carboxamide (formate route): step 1/1. Functionally, catalyzes the ATP- and formate-dependent formylation of 5-aminoimidazole-4-carboxamide-1-beta-d-ribofuranosyl 5'-monophosphate (AICAR) to 5-formaminoimidazole-4-carboxamide-1-beta-d-ribofuranosyl 5'-monophosphate (FAICAR) in the absence of folates. The sequence is that of 5-formaminoimidazole-4-carboxamide-1-(beta)-D-ribofuranosyl 5'-monophosphate synthetase from Caldivirga maquilingensis (strain ATCC 700844 / DSM 13496 / JCM 10307 / IC-167).